A 41-amino-acid chain; its full sequence is Photosystem I reaction center subunit VIII (41 aa).

The chain crosses the membrane as a helical span at residues 12-32; it reads WIMIPVTCWLFPVVVMGLLFI.

Belongs to the PsaI family.

It is found in the cellular thylakoid membrane. May help in the organization of the PsaL subunit. This Cyanothece sp. (strain PCC 7425 / ATCC 29141) protein is Photosystem I reaction center subunit VIII.